We begin with the raw amino-acid sequence, 145 residues long: Arginine repressor (145 aa).

Belongs to the ArgR family.

It localises to the cytoplasm. It participates in amino-acid biosynthesis; L-arginine biosynthesis [regulation]. Regulates arginine biosynthesis genes. The polypeptide is Arginine repressor (Streptococcus equi subsp. zooepidemicus (strain H70)).